A 696-amino-acid polypeptide reads, in one-letter code: Elongation factor G (696 aa).

Positions 8–290 (ERYRNIGVMA…AVLDYLPSPA (283 aa)) constitute a tr-type G domain. Residues 17-24 (AHIDAGKT), 88-92 (DTPGH), and 142-145 (NKMD) contribute to the GTP site.

This sequence belongs to the TRAFAC class translation factor GTPase superfamily. Classic translation factor GTPase family. EF-G/EF-2 subfamily.

It is found in the cytoplasm. Functionally, catalyzes the GTP-dependent ribosomal translocation step during translation elongation. During this step, the ribosome changes from the pre-translocational (PRE) to the post-translocational (POST) state as the newly formed A-site-bound peptidyl-tRNA and P-site-bound deacylated tRNA move to the P and E sites, respectively. Catalyzes the coordinated movement of the two tRNA molecules, the mRNA and conformational changes in the ribosome. The sequence is that of Elongation factor G from Nitrosospira multiformis (strain ATCC 25196 / NCIMB 11849 / C 71).